The chain runs to 83 residues: Exodeoxyribonuclease 7 small subunit (83 aa).

This sequence belongs to the XseB family. As to quaternary structure, heterooligomer composed of large and small subunits.

The protein localises to the cytoplasm. It carries out the reaction Exonucleolytic cleavage in either 5'- to 3'- or 3'- to 5'-direction to yield nucleoside 5'-phosphates.. Functionally, bidirectionally degrades single-stranded DNA into large acid-insoluble oligonucleotides, which are then degraded further into small acid-soluble oligonucleotides. In Bradyrhizobium sp. (strain ORS 278), this protein is Exodeoxyribonuclease 7 small subunit.